The following is a 296-amino-acid chain: tRNA dimethylallyltransferase (296 aa).

11–18 (GPTAVGKT) contributes to the ATP binding site. 13–18 (TAVGKT) lines the substrate pocket. Residues 36-39 (DSQQ) form an interaction with substrate tRNA region.

The protein belongs to the IPP transferase family. In terms of assembly, monomer. It depends on Mg(2+) as a cofactor.

It carries out the reaction adenosine(37) in tRNA + dimethylallyl diphosphate = N(6)-dimethylallyladenosine(37) in tRNA + diphosphate. Its function is as follows. Catalyzes the transfer of a dimethylallyl group onto the adenine at position 37 in tRNAs that read codons beginning with uridine, leading to the formation of N6-(dimethylallyl)adenosine (i(6)A). The polypeptide is tRNA dimethylallyltransferase (Streptococcus agalactiae serotype III (strain NEM316)).